The sequence spans 206 residues: Protein GET1 (206 aa).

The Lumenal segment spans residues 1–4; that stretch reads MPSL. Residues 5-24 form a helical membrane-spanning segment; sequence LITILLLNIVIYVINTIGAA. Topologically, residues 25–110 are cytoplasmic; that stretch reads TIDSLLWLFY…SFDMTVKSVR (86 aa). A coiled-coil region spans residues 42–99; the sequence is SHMAREQRRLKREVIQLKREMNATSSQDEFAKWAKLRRRHDKALETYEAKNNELTQCK. A helical membrane pass occupies residues 111–131; sequence WAATSGLMLFLQFWYSKRPIF. The Lumenal segment spans residues 132–155; that stretch reads TLPPGWIPWQVQWVLSFPRAPMGT. The chain crosses the membrane as a helical span at residues 156 to 172; it reads VSIQIWGGACATVVALV. Residues 173 to 206 are Cytoplasmic-facing; that stretch reads GDAVGATMGFVSASKKEGMKVGAGVGEKEGKKSQ.

Belongs to the WRB/GET1 family. As to quaternary structure, interacts with GET3.

The protein resides in the endoplasmic reticulum membrane. In terms of biological role, required for the post-translational delivery of tail-anchored (TA) proteins to the endoplasmic reticulum. Acts as a membrane receptor for soluble GET3, which recognizes and selectively binds the transmembrane domain of TA proteins in the cytosol. This Ajellomyces dermatitidis (strain ER-3 / ATCC MYA-2586) (Blastomyces dermatitidis) protein is Protein GET1.